Reading from the N-terminus, the 349-residue chain is Phosphoribosylformylglycinamidine cyclo-ligase (349 aa).

It belongs to the AIR synthase family.

The protein resides in the cytoplasm. It carries out the reaction 2-formamido-N(1)-(5-O-phospho-beta-D-ribosyl)acetamidine + ATP = 5-amino-1-(5-phospho-beta-D-ribosyl)imidazole + ADP + phosphate + H(+). Its pathway is purine metabolism; IMP biosynthesis via de novo pathway; 5-amino-1-(5-phospho-D-ribosyl)imidazole from N(2)-formyl-N(1)-(5-phospho-D-ribosyl)glycinamide: step 2/2. The chain is Phosphoribosylformylglycinamidine cyclo-ligase from Jannaschia sp. (strain CCS1).